Consider the following 218-residue polypeptide: Small ribosomal subunit protein uS3 (218 aa).

Residues 38-106 (IREYINKRLQ…REHINIVEIK (69 aa)) enclose the KH type-2 domain.

The protein belongs to the universal ribosomal protein uS3 family. In terms of assembly, part of the 30S ribosomal subunit. Forms a tight complex with proteins S10 and S14.

Functionally, binds the lower part of the 30S subunit head. Binds mRNA in the 70S ribosome, positioning it for translation. The polypeptide is Small ribosomal subunit protein uS3 (Geobacillus stearothermophilus (Bacillus stearothermophilus)).